We begin with the raw amino-acid sequence, 304 residues long: tRNA-uridine aminocarboxypropyltransferase 1 (304 aa).

Disordered regions lie at residues 1 to 29 and 165 to 193; these read MALS…QTTS and RNKA…HEST. The span at 180-193 shows a compositional bias: basic and acidic residues; sequence RTTDEEGWDLHEST. The short motif at 206–209 is the DXTW element; it reads DSTW.

This sequence belongs to the TDD superfamily. DTWD1 family.

The protein resides in the nucleus. The enzyme catalyses a uridine in tRNA + S-adenosyl-L-methionine = a 3-[(3S)-3-amino-3-carboxypropyl]uridine in tRNA + S-methyl-5'-thioadenosine + H(+). Its function is as follows. Catalyzes the formation of 3-(3-amino-3-carboxypropyl)uridine (acp3U) at position 20 in the D-loop of several cytoplasmic tRNAs (acp3U(20)). This Mus musculus (Mouse) protein is tRNA-uridine aminocarboxypropyltransferase 1.